The primary structure comprises 587 residues: Phosphatidate phosphatase APP1 (587 aa).

Disordered stretches follow at residues 1–28 (MNSQGYDESSSSTAATSGPTSGDPRMGK) and 150–178 (PPHLEEDSGDLNDSQSSIESSLSSKSENR). 2 stretches are compositionally biased toward low complexity: residues 9–22 (SSSSTAATSGPTSG) and 163–174 (SQSSIESSLSSK). Residues 281 to 285 (DIDDT) carry the DXDXT motif motif. Residues 452-521 (QQRPMQMTKS…NRQLPNLDAN (70 aa)) are disordered. Residues 467–483 (RRPPPPPIPSTQKPSLT) are interaction with SH3 domain of ABP1.

In terms of assembly, monomer. Interacts with ABP1. Mg(2+) is required as a cofactor. N-glycosylated.

Its subcellular location is the cytoplasm. The protein localises to the cytoskeleton. It localises to the actin patch. The enzyme catalyses a 1,2-diacyl-sn-glycero-3-phosphate + H2O = a 1,2-diacyl-sn-glycerol + phosphate. It carries out the reaction 1,2-di-(9Z-octadecenoyl)-sn-glycero-3-phosphate + H2O = 1,2-di-(9Z-octadecenoyl)-sn-glycerol + phosphate. Its activity is regulated as follows. Inhibited by N-ethylmaleimide. Mg(2+)-dependent phosphatidate (PA) phosphatase which catalyzes the dephosphorylation of PA to yield diacylglycerol. May play a role in vesicular trafficking through its PAP activity at cortical actin patches. Can also utilize diacylglycerol pyrophosphate and lyso-PA as substrates with specificity constants 4- and 7-fold lower, respectively, when compared with PA. This is Phosphatidate phosphatase APP1 (APP1) from Saccharomyces cerevisiae (strain ATCC 204508 / S288c) (Baker's yeast).